The sequence spans 404 residues: MSKVNVNKVVVAYSGGLDTSVIIPWLKENYDCEVVAFVADVGQGAEELEGIEAKAKASGASECYIADLKEEMVADYIYPTLKTGAYYEGKYLLGTSMARPIIAKAQVEVARKVGADALCHGCTGKGNDQVRFEGAFAALAPDLHVIAPWREWDLVSREQCLDYLAERNIPCSASLTKIYSRDANAWHISTEGGVLENTWNAPNEDCWVWTVDPEQAPNEAEYVTLKVEKGEVVAVDGEAMTPYNALVYLNEKGAKHGVGRIDIVENRLVGMKSRGCYETPGGTIMMEALRAVEQLVLDKSSFEFREELGLKASHLVYDGRWFTPLCKSILAASEELAQDVNGEVVVKLYKGQATVTQKRSDNSLYSEEFATFGEDEVYDQSHAGGFIRLYSLSSRIRALNSQKK.

ATP is bound by residues 12-20 (AYSGGLDTS) and Ala-39. Residues Tyr-91 and Ser-96 each contribute to the L-citrulline site. Gly-121 provides a ligand contact to ATP. Thr-123, Asn-127, and Asp-128 together coordinate L-aspartate. Asn-127 is a binding site for L-citrulline. 5 residues coordinate L-citrulline: Arg-131, Ser-180, Ser-189, Glu-265, and Tyr-277.

It belongs to the argininosuccinate synthase family. Type 1 subfamily. Homotetramer.

The protein localises to the cytoplasm. The catalysed reaction is L-citrulline + L-aspartate + ATP = 2-(N(omega)-L-arginino)succinate + AMP + diphosphate + H(+). It functions in the pathway amino-acid biosynthesis; L-arginine biosynthesis; L-arginine from L-ornithine and carbamoyl phosphate: step 2/3. In Vibrio parahaemolyticus serotype O3:K6 (strain RIMD 2210633), this protein is Argininosuccinate synthase.